The chain runs to 465 residues: GTPase Der (465 aa).

EngA-type G domains are found at residues 3–167 (PLVA…PEEG) and 179–352 (VRIA…ASAT). GTP contacts are provided by residues 9 to 16 (GRPNVGKS), 57 to 61 (DTGGI), 119 to 122 (NKID), 185 to 192 (GRPNVGKS), 232 to 236 (DTAGL), and 297 to 300 (NKWD). A KH-like domain is found at 353–437 (HEFSTSEVNQ…PVCFIFREGA (85 aa)).

Belongs to the TRAFAC class TrmE-Era-EngA-EngB-Septin-like GTPase superfamily. EngA (Der) GTPase family. As to quaternary structure, associates with the 50S ribosomal subunit.

GTPase that plays an essential role in the late steps of ribosome biogenesis. This is GTPase Der from Xanthomonas oryzae pv. oryzae (strain MAFF 311018).